Reading from the N-terminus, the 226-residue chain is Uridylate kinase (226 aa).

Position 6 to 10 (6 to 10 (KISGK)) interacts with ATP. Glycine 43 is a UMP binding site. The ATP site is built by glycine 44 and arginine 48. UMP is bound by residues aspartate 65 and 113 to 119 (FQPGQST). ATP is bound by residues threonine 139, asparagine 140, tyrosine 145, and aspartate 148.

The protein belongs to the UMP kinase family. Homohexamer.

The protein localises to the cytoplasm. It carries out the reaction UMP + ATP = UDP + ADP. It participates in pyrimidine metabolism; CTP biosynthesis via de novo pathway; UDP from UMP (UMPK route): step 1/1. With respect to regulation, inhibited by UTP. In terms of biological role, catalyzes the reversible phosphorylation of UMP to UDP. The sequence is that of Uridylate kinase from Saccharolobus islandicus (strain Y.N.15.51 / Yellowstone #2) (Sulfolobus islandicus).